A 331-amino-acid polypeptide reads, in one-letter code: Pantothenate kinase (331 aa).

109–116 (GSVAVGKS) contacts ATP.

The protein belongs to the prokaryotic pantothenate kinase family.

The protein resides in the cytoplasm. The catalysed reaction is (R)-pantothenate + ATP = (R)-4'-phosphopantothenate + ADP + H(+). It functions in the pathway cofactor biosynthesis; coenzyme A biosynthesis; CoA from (R)-pantothenate: step 1/5. The sequence is that of Pantothenate kinase from Rhizobium johnstonii (strain DSM 114642 / LMG 32736 / 3841) (Rhizobium leguminosarum bv. viciae).